The sequence spans 145 residues: Pleckstrin homology domain-containing protein 1 (145 aa).

The region spanning 26–127 (NPERSGWLTK…WINSIGRSIV (102 aa)) is the PH domain. A binds specifically PtdIns3P region spans residues 29–53 (RSGWLTKQGDYIKTWRRRWFVLKRG).

In terms of assembly, binds PtdIns3P. As to expression, ubiquitously expressed.

The protein localises to the cytoplasm. In terms of biological role, binds specifically to phosphatidylinositol 3-phosphate (PtdIns3P), but not to other phosphoinositides. The polypeptide is Pleckstrin homology domain-containing protein 1 (PH1) (Arabidopsis thaliana (Mouse-ear cress)).